The sequence spans 1612 residues: MAHFQQTMNNKVIEAGMGRNSLINDLAQRRVYDNAVEELNHRSRRPKVNFSKVISQEQIIQATNAYPEFEITFYNTQLAVHSMAGGLRALELEYLMMQIPFGSITYDIGGNFSAHLYKGRDYVHCCMPNLDIRDVARHINQQDTVSTYLARLERSKRGLPVFQQSAFNKYMNDPDAVCCDKRFQDCSYSVDLPGKTYAVALHSIYDIPADEFGAALLRKDVHICYAAFHFSENLLLETTSAPLDEIGATFYKSGDRLSFFFQNESTLNYEHSYKNVIKYVCKTFFPASNRFVYHKEFMCTRVNTWFCKFTKVDTYFLFRGVYTRGEDSEQFYTAMDEAWEYKKTLAMLKCERTIFRDRAAVNFWFPKVKDMVIVPLFDGSVTSGKMKRSEVMVNKDFVYTVLNHIRTYQDKALTYKNVLSFVESIRSRVIINGVSARSEWDVDKSVLQALSMTFLLQTKLAEAKDQVVLKKFQKFDDTVTNLFWKQISDAVGDLFPSIKETLISGGFVKVAEQSLQIKTPDEYITFADKLVMEYKATEELQHLDISKPLERAEKYYNALSELSVLKECDEFDITQFKNLCEEKDIDPDVVAKVIVAIMKNELTLPFKNPTPEALSDALSPLPKDLDMRFDLLKLSTCAPFPSVKTLDSGLLPKQSYGDERQFESQSVVSVSDFHLKSVESVKMKSMSSAVYTGPLKVQQMKNYMDYLSASISATVSNLCKVLKDVYGADPESAEKSGVYDVVKGKWLLKPKGKCHAWGVAELNNGEKVIVLLEWADGFPICGDWRRVAVSSDSLIYSDMGKLQTLLSCLKDGEPVPSDAKVTLVDGVPGCGKTKEILETVNFDEDLILVPGKEACKMIIKRANKSGHVRATKDNVRTVDSFLMHLKPKTYNKLFIDEGLMLHTGCVNFLIALSHCREAMVFGDTEQIPFINRVANFPYPKHFATLVYDHREVRRLSLRCPADVTHFMNSKYDGKVLCTNDVIRSVDAEVVRGKGVFNPKSKPLKGKIITFTQSDKAELKERGYEEVSTFGEINTVHEIQGETFEDVSVVRLTPTPLELISKSSPHVLVALTRHTKSFKYYSVVLDPLVKVCSDLSKVSDFILDMYKVDAGILXQLQVGSIFKGENLFVPCPKSGYISDMQFYYDTLLPGNSTILNEYDAVTMNLRENNLNVKDCTIDFSKSVSVPRQQQEFFTPVIRTAAERPRSRGLLENLVAMIKRNFNSPDLTGILDIEDTAELVVNKFWDAYIIDELSGGNVTPMTSDAFHRWMAKQEKSTIGQLADFDFVDLPAIDQYKHMIKAQPKQKLDLSPQDEYAALQTIVYHSKQINAIFGPLFSELTRQLLERIDSSKFLFYTRKTPEQIEEFFSDLDSTVPMEVLELDISKYDKSQNEFHCAVEYLIWEKLGLNGFLEEVWKQGHRKTSLKDYTAGIKTCLWYQRKSGDVTTFIGNTVIIAACLASMIPMDKVIKAAFCGDDSMLYIPKGLDLPDIQSGANLMWNFEAKLYRKRYGYFCGRYIIHHDRGAIVYYDPVKLISKLGCKHIKSLDHLEEFRISLCDVSASLNNCAYYGQLNDAIAEVHKTAVNGSFAFCSIVKYLSDKNLFRTLFYNGSSTKG.

A methyltransferase region spans residues 50–452 (FSKVISQEQI…DKSVLQALSM (403 aa)). One can recognise an Alphavirus-like MT domain in the interval 72–280 (TFYNTQLAVH…HSYKNVIKYV (209 aa)). One can recognise a (+)RNA virus helicase ATP-binding domain in the interval 794-953 (LIYSDMGKLQ…TLVYDHREVR (160 aa)). A helicase region spans residues 822–1080 (TLVDGVPGCG…TRHTKSFKYY (259 aa)). 826–833 (GVPGCGKT) is a binding site for ATP. One can recognise a (+)RNA virus helicase C-terminal domain in the interval 954–1112 (RLSLRCPADV…DMYKVDAGIL (159 aa)). One can recognise a RdRp catalytic domain in the interval 1374–1487 (MEVLELDISK…YIPKGLDLPD (114 aa)).

This sequence belongs to the ssRNA positive-strand viruses RNA-directed RNA polymerase family. In terms of assembly, heterodimer of a large and a small subunit.

It catalyses the reaction RNA(n) + a ribonucleoside 5'-triphosphate = RNA(n+1) + diphosphate. The enzyme catalyses ATP + H2O = ADP + phosphate + H(+). Its function is as follows. Is an RNA-dependent RNA polymerase active in viral RNA replication. In terms of biological role, is a methyltransferase active in RNA capping and an RNA helicase. Methyltransferase displays a cytoplasmic capping enzyme activity. This function is necessary since all viral RNAs are synthesized in the cytoplasm, and host capping enzymes are restricted to the nucleus. Helicase region probably exhibits NTPase and RNA unwinding activities (Potential). It also acts as a suppressor of RNA-mediated gene silencing, also known as post-transcriptional gene silencing (PTGS), a mechanism of plant viral defense that limits the accumulation of viral RNAs. May mediate silencing suppression through either inhibition of HEN1-mediated siRNA or siRNA demethylation. This Cymbidium (ORSV-Cy) protein is Replicase large subunit.